A 262-amino-acid chain; its full sequence is uncharacterized protein (262 aa).

Residues 6–70 (LRINQFLAHY…LKNKKFSVLV (65 aa)) form the S4 RNA-binding domain. D108 acts as the Nucleophile in catalysis.

Belongs to the pseudouridine synthase RsuA family.

The enzyme catalyses a uridine in RNA = a pseudouridine in RNA. This is an uncharacterized protein from Helicobacter pylori (strain J99 / ATCC 700824) (Campylobacter pylori J99).